Reading from the N-terminus, the 166-residue chain is MAAKGELVGSKVLVRNDRDANRLYSSMYGKPSRRGLQLWPEEALFLCEIGRLEVRSGNVRISPEELMDRFVEEDPRFPVRYAVYADLRRRGWKPKPGRKFGTEFRAFRGEDERIAVKVLQEELDEFTAQDILEWLKLVEGTEFELVVAIVDNDYDLNYYVFSELVL.

The protein belongs to the tRNA-intron endonuclease family. Archaeal short subfamily.

This Methanopyrus kandleri (strain AV19 / DSM 6324 / JCM 9639 / NBRC 100938) protein is EndA-like protein.